The chain runs to 1462 residues: Tyrosine-protein phosphatase 69D (1462 aa).

An N-terminal signal peptide occupies residues 1-28; the sequence is MALLYRRMSMLLNIILAYIFLCAICVQG. Ig-like C2-type domains are found at residues 29–125 and 131–230; these read SVKQ…TEFQ and PSKV…KEIT. Topologically, residues 29 to 805 are extracellular; the sequence is SVKQEWAEIG…MDYYLSIGVK (777 aa). N-linked (GlcNAc...) asparagine glycans are attached at residues Asn-40, Asn-58, Asn-64, Asn-85, Asn-109, Asn-119, Asn-162, Asn-191, Asn-196, Asn-209, Asn-255, Asn-288, Asn-302, Asn-429, Asn-442, Asn-451, Asn-516, Asn-613, Asn-701, and Asn-755. Cys-45 and Cys-112 are oxidised to a cystine. Cys-154 and Cys-214 are oxidised to a cystine. Fibronectin type-III domains are found at residues 237–332, 334–435, and 439–547; these read PQVS…TLSY, PIFI…TMDG, and KPTN…TPDA. Residues 806–823 form a helical membrane-spanning segment; the sequence is AGAVLLGVILVFIVLWVF. The Cytoplasmic segment spans residues 824-1462; that stretch reads HHKKTKNELQ…LHHIAESTLD (639 aa). Tyrosine-protein phosphatase domains are found at residues 893-1156 and 1187-1450; these read FLRE…LLDT and LEVE…IINY. Catalysis depends on phosphocysteine intermediate residues Cys-1097 and Cys-1391.

It belongs to the protein-tyrosine phosphatase family. Receptor class subfamily.

The protein resides in the membrane. It carries out the reaction O-phospho-L-tyrosyl-[protein] + H2O = L-tyrosyl-[protein] + phosphate. Its function is as follows. Possible cell adhesion receptor. The polypeptide is Tyrosine-protein phosphatase 69D (Ptp69D) (Drosophila melanogaster (Fruit fly)).